Here is a 316-residue protein sequence, read N- to C-terminus: GTP cyclohydrolase FolE2 1 (316 aa).

Belongs to the GTP cyclohydrolase IV family.

The enzyme catalyses GTP + H2O = 7,8-dihydroneopterin 3'-triphosphate + formate + H(+). The protein operates within cofactor biosynthesis; 7,8-dihydroneopterin triphosphate biosynthesis; 7,8-dihydroneopterin triphosphate from GTP: step 1/1. Functionally, converts GTP to 7,8-dihydroneopterin triphosphate. The sequence is that of GTP cyclohydrolase FolE2 1 from Burkholderia orbicola (strain AU 1054).